Here is a 120-residue protein sequence, read N- to C-terminus: Small ribosomal subunit protein uS17m (120 aa).

A mitochondrion-targeting transit peptide spans 1 to 20 (MSIVRSSVHAKWVVGKVIGT).

It belongs to the universal ribosomal protein uS17 family. Component of the mitochondrial ribosome small subunit (28S) which comprises a 12S rRNA and about 30 distinct proteins.

The protein resides in the mitochondrion. This Mus musculus (Mouse) protein is Small ribosomal subunit protein uS17m (Mrps17).